The following is a 186-amino-acid chain: MKQSAVVSKITQPYAEALLEMAQKYDIVETVNNDITLILNCLQNSTKLQQFLANPLVKKSSKKNFFEKTLAKEIHPYTFKFLLLVIDRGRISCLEIIAQKYQSLILKLTKTELAEVVTAVPLSSEQEAALNNIIKELTNANEVKLVFKIDQNLIGGFIINIGSKVVDASLLGQLLRIGNYLGLETV.

It belongs to the ATPase delta chain family. F-type ATPases have 2 components, F(1) - the catalytic core - and F(0) - the membrane proton channel. F(1) has five subunits: alpha(3), beta(3), gamma(1), delta(1), epsilon(1). CF(0) has four main subunits: a(1), b(1), b'(1) and c(10-14). The alpha and beta chains form an alternating ring which encloses part of the gamma chain. F(1) is attached to F(0) by a central stalk formed by the gamma and epsilon chains, while a peripheral stalk is formed by the delta, b and b' chains.

The protein resides in the plastid. It localises to the cyanelle thylakoid membrane. Its function is as follows. F(1)F(0) ATP synthase produces ATP from ADP in the presence of a proton or sodium gradient. F-type ATPases consist of two structural domains, F(1) containing the extramembraneous catalytic core and F(0) containing the membrane proton channel, linked together by a central stalk and a peripheral stalk. During catalysis, ATP synthesis in the catalytic domain of F(1) is coupled via a rotary mechanism of the central stalk subunits to proton translocation. In terms of biological role, this protein is part of the stalk that links CF(0) to CF(1). It either transmits conformational changes from CF(0) to CF(1) or is implicated in proton conduction. The chain is ATP synthase subunit delta, cyanelle from Cyanophora paradoxa.